The primary structure comprises 202 residues: Superoxide dismutase [Cu-Zn], chloroplastic (202 aa).

The N-terminal 48 residues, 1–48 (MASQTLVSPSPLSSHSLLRTSFSGVSVKLAPQFSTLATSNFKPLTVVA), are a transit peptide targeting the chloroplast. Cu cation contacts are provided by H94, H96, and H111. Residues C105 and C194 are joined by a disulfide bond. Zn(2+) contacts are provided by H111, H119, H128, and D131. Residue H168 participates in Cu cation binding.

Belongs to the Cu-Zn superoxide dismutase family. Homotetramer. Cu cation is required as a cofactor. Zn(2+) serves as cofactor.

It localises to the plastid. Its subcellular location is the chloroplast. It catalyses the reaction 2 superoxide + 2 H(+) = H2O2 + O2. Functionally, destroys radicals which are normally produced within the cells and which are toxic to biological systems. This is Superoxide dismutase [Cu-Zn], chloroplastic (SODCP) from Pisum sativum (Garden pea).